Here is a 121-residue protein sequence, read N- to C-terminus: Large ribosomal subunit protein bL21 (121 aa).

Belongs to the bacterial ribosomal protein bL21 family. Part of the 50S ribosomal subunit. Contacts protein L20.

Its function is as follows. This protein binds to 23S rRNA in the presence of protein L20. The protein is Large ribosomal subunit protein bL21 of Gloeobacter violaceus (strain ATCC 29082 / PCC 7421).